A 613-amino-acid polypeptide reads, in one-letter code: Dihydroxy-acid dehydratase (613 aa).

Aspartate 81 contacts Mg(2+). Cysteine 122 provides a ligand contact to [2Fe-2S] cluster. Positions 123 and 124 each coordinate Mg(2+). N6-carboxylysine is present on lysine 124. Residue cysteine 193 participates in [2Fe-2S] cluster binding. Position 489 (glutamate 489) interacts with Mg(2+). Serine 515 serves as the catalytic Proton acceptor.

This sequence belongs to the IlvD/Edd family. As to quaternary structure, homodimer. [2Fe-2S] cluster is required as a cofactor. Requires Mg(2+) as cofactor.

It catalyses the reaction (2R)-2,3-dihydroxy-3-methylbutanoate = 3-methyl-2-oxobutanoate + H2O. The enzyme catalyses (2R,3R)-2,3-dihydroxy-3-methylpentanoate = (S)-3-methyl-2-oxopentanoate + H2O. It participates in amino-acid biosynthesis; L-isoleucine biosynthesis; L-isoleucine from 2-oxobutanoate: step 3/4. The protein operates within amino-acid biosynthesis; L-valine biosynthesis; L-valine from pyruvate: step 3/4. Functions in the biosynthesis of branched-chain amino acids. Catalyzes the dehydration of (2R,3R)-2,3-dihydroxy-3-methylpentanoate (2,3-dihydroxy-3-methylvalerate) into 2-oxo-3-methylpentanoate (2-oxo-3-methylvalerate) and of (2R)-2,3-dihydroxy-3-methylbutanoate (2,3-dihydroxyisovalerate) into 2-oxo-3-methylbutanoate (2-oxoisovalerate), the penultimate precursor to L-isoleucine and L-valine, respectively. This is Dihydroxy-acid dehydratase from Pseudomonas putida (strain ATCC 700007 / DSM 6899 / JCM 31910 / BCRC 17059 / LMG 24140 / F1).